The primary structure comprises 60 residues: Myrmicitoxin(1)-Pr4a (60 aa).

The signal sequence occupies residues 1 to 23; that stretch reads MKAIIFLFAVLTVVAIIIPIISG. Positions 24–33 are excised as a propeptide; that stretch reads EPNAGPHAAS. Position 59 is a glutamine amide (Gln-59).

This sequence belongs to the formicidae venom clade 2 family. As to expression, expressed by the venom gland.

The protein resides in the secreted. Functionally, toxin that causes a rapid and irreversible paralysis when intrathoracically injected into insects (blowflies). Does not cause spontaneous nocifensive behaviors by intraplantar injection in mice. This chain is Myrmicitoxin(1)-Pr4a, found in Pogonomyrmex rugosus (Desert harvester ant).